The following is a 144-amino-acid chain: Probable tail assembly protein gp41 (144 aa).

This sequence belongs to the mulikevirus tail assembly protein family.

It localises to the host cytoplasm. Required for tail assembly. Together with FS-gp41, may act as a chaperone mediating the interaction between the tape measure protein (TMP) and the tail tube protein (TTP) thereby directing the polymerization of TTP to form a tail of the correct length (Potential). The sequence is that of Probable tail assembly protein gp41 from Enterobacteriaceae (Bacteriophage Mu).